A 346-amino-acid chain; its full sequence is Probable RNA methyltransferase PSPA7_3453 (346 aa).

The active-site Proton acceptor is Glu91. The 227-residue stretch at 94–320 (LLPRGGLCVS…TKVRNSAGQD (227 aa)) folds into the Radical SAM core domain. Cys101 and Cys325 are disulfide-bonded. The [4Fe-4S] cluster site is built by Cys108, Cys112, and Cys115. S-adenosyl-L-methionine-binding positions include 153-154 (GE), Ser183, 206-208 (SLH), and Asn282. The S-methylcysteine intermediate role is filled by Cys325.

This sequence belongs to the radical SAM superfamily. RlmN family. The cofactor is [4Fe-4S] cluster.

The protein localises to the cytoplasm. The chain is Probable RNA methyltransferase PSPA7_3453 from Pseudomonas paraeruginosa (strain DSM 24068 / PA7) (Pseudomonas aeruginosa (strain PA7)).